The primary structure comprises 357 residues: MTATLAAPSKTRRVVFPFTAIVGQDEMKLALLLNVIDPKIGGVMIMGDRGTGKSTTIRALADLLPEIEVVANDPFNSSPSDPEMMSEEVRIRVDSQEPLSIVKKKVTMVDLPLGATEDRVCGTIDIEKALSEGVKAFEPGLLAKANRGILYVDEVNLLDDHLVDVLLDSAAGGWNTVEREGISIRHPARFVLVGSGNPEEGELRPQLLDRFGMHAEIRTVREPELRVKIVEQRTEFDQNPHPFCDQYQTEQEALQAKIVNAQNLLPQVTIDYDYRVKVSEVCAELDVDGLRGDIVTNRAAKALAAFEGRTEVTVDDISRVIVLCLRHRLRKDPLESIDSGSKVEKVFKRVFGVVDEA.

Residue Gly-47–Ser-54 coordinates ATP.

It belongs to the Mg-chelatase subunits D/I family.

It catalyses the reaction protoporphyrin IX + Mg(2+) + ATP + H2O = Mg-protoporphyrin IX + ADP + phosphate + 3 H(+). The protein operates within porphyrin-containing compound metabolism; chlorophyll biosynthesis. Functionally, involved in chlorophyll biosynthesis; introduces a magnesium ion into protoporphyrin IX to yield Mg-protoporphyrin IX. The chain is Magnesium-chelatase subunit ChlI (chlI) from Synechocystis sp. (strain ATCC 27184 / PCC 6803 / Kazusa).